We begin with the raw amino-acid sequence, 104 residues long: uncharacterized protein (104 aa).

A helical transmembrane segment spans residues 77–98; that stretch reads IAAVRANIIICACFFYLFCYCS.

The protein localises to the membrane. This is an uncharacterized protein from Saccharomyces cerevisiae (strain ATCC 204508 / S288c) (Baker's yeast).